The primary structure comprises 365 residues: UDP-N-acetylglucosamine--N-acetylmuramyl-(pentapeptide) pyrophosphoryl-undecaprenol N-acetylglucosamine transferase (365 aa).

Residues 19–21 (TGG), asparagine 131, arginine 170, serine 201, isoleucine 255, 274–279 (ALTVTE), and glutamine 300 each bind UDP-N-acetyl-alpha-D-glucosamine.

Belongs to the glycosyltransferase 28 family. MurG subfamily.

The protein localises to the cell inner membrane. It catalyses the reaction di-trans,octa-cis-undecaprenyl diphospho-N-acetyl-alpha-D-muramoyl-L-alanyl-D-glutamyl-meso-2,6-diaminopimeloyl-D-alanyl-D-alanine + UDP-N-acetyl-alpha-D-glucosamine = di-trans,octa-cis-undecaprenyl diphospho-[N-acetyl-alpha-D-glucosaminyl-(1-&gt;4)]-N-acetyl-alpha-D-muramoyl-L-alanyl-D-glutamyl-meso-2,6-diaminopimeloyl-D-alanyl-D-alanine + UDP + H(+). The protein operates within cell wall biogenesis; peptidoglycan biosynthesis. Functionally, cell wall formation. Catalyzes the transfer of a GlcNAc subunit on undecaprenyl-pyrophosphoryl-MurNAc-pentapeptide (lipid intermediate I) to form undecaprenyl-pyrophosphoryl-MurNAc-(pentapeptide)GlcNAc (lipid intermediate II). The chain is UDP-N-acetylglucosamine--N-acetylmuramyl-(pentapeptide) pyrophosphoryl-undecaprenol N-acetylglucosamine transferase from Acinetobacter baumannii (strain AB307-0294).